A 318-amino-acid polypeptide reads, in one-letter code: Acetyl-coenzyme A carboxylase carboxyl transferase subunit alpha (318 aa).

The CoA carboxyltransferase C-terminal domain occupies 38-292 (KLEKRLAKLE…NKTITKSLHA (255 aa)).

Belongs to the AccA family. In terms of assembly, acetyl-CoA carboxylase is a heterohexamer composed of biotin carboxyl carrier protein (AccB), biotin carboxylase (AccC) and two subunits each of ACCase subunit alpha (AccA) and ACCase subunit beta (AccD).

Its subcellular location is the cytoplasm. The enzyme catalyses N(6)-carboxybiotinyl-L-lysyl-[protein] + acetyl-CoA = N(6)-biotinyl-L-lysyl-[protein] + malonyl-CoA. Its pathway is lipid metabolism; malonyl-CoA biosynthesis; malonyl-CoA from acetyl-CoA: step 1/1. Functionally, component of the acetyl coenzyme A carboxylase (ACC) complex. First, biotin carboxylase catalyzes the carboxylation of biotin on its carrier protein (BCCP) and then the CO(2) group is transferred by the carboxyltransferase to acetyl-CoA to form malonyl-CoA. The sequence is that of Acetyl-coenzyme A carboxylase carboxyl transferase subunit alpha from Listeria innocua serovar 6a (strain ATCC BAA-680 / CLIP 11262).